Consider the following 996-residue polypeptide: Disease resistance protein RGA4 (996 aa).

The tract at residues 1 to 176 is structured coiled coil (CC) domain; that stretch reads MEAALLSGFI…PRIHEADLVG (176 aa). Residues 111–138 adopt a coiled-coil conformation; the sequence is NLQLAQQLQRLKRMAAEANQRKQRYTAA. In terms of domain architecture, NB-ARC spans 180 to 462; sequence DREELLEQLA…RWLAEGFVEP (283 aa). LRR repeat units follow at residues 481–503, 504–528, 529–549, 577–599, 600–621, 622–644, 698–722, 759–781, 782–804, 805–830, and 851–874; these read RNII…TYGM, MREF…KFVP, KYVR…NFNG, LRVL…ICNL, VLLK…IAKL, KDLE…VFGL, MNKL…DLRE, PCYL…VTSL, RGLK…ALSN, LSYL…GFPR, and LPFL…QIEC.

It belongs to the disease resistance NB-LRR family. In terms of assembly, forms homodimer or heterodimer with RGA5 through its coiled coil (CC) domain. Expressed in leaves.

The protein localises to the cytoplasm. Its function is as follows. Disease resistance (R) protein. Resistance proteins guard the plant against pathogens that contain an appropriate avirulence protein via an indirect interaction with this avirulence protein. That triggers a defense system including the hypersensitive response, which restricts the pathogen growth. Contribution of RGA5 is required to recognize the effector avirulence proteins AVR-Pia and AVR1-CO39 from M.oryzae. Acts as a constitutively active cell death inducer that is repressed by RGA5. Immune response triggered by the RGA4-RGA5 -mediated recognition of AVR1-CO39 confers resistance to X.oryzae pathovars. This is Disease resistance protein RGA4 from Oryza sativa subsp. japonica (Rice).